Reading from the N-terminus, the 1042-residue chain is Serine/threonine-protein kinase LATS2 (1042 aa).

Residues 23–44 (REGLKQPSKASTQGLLVGPNSD) are disordered. Polar residues predominate over residues 30–44 (SKASTQGLLVGPNSD). Residue serine 82 is modified to Phosphoserine; by AURKA. A UBA domain is found at 97 to 138 (EVNRQMLQELVNAGCDQEMAGRALKQTGSRSIEAALEYISKM). Residues 100–140 (RQMLQELVNAGCDQEMAGRALKQTGSRSIEAALEYISKMGY) are interaction with ubiquitinated AMOTL2. Residues 237–282 (HFPGTHYGRGHLLSEQPGYGVQRSSSFQNKTPPDAYSSMAKAQGGP) are disordered. Residues 258–267 (QRSSSFQNKT) are compositionally biased toward polar residues. Residue threonine 267 is modified to Phosphothreonine. At serine 362 the chain carries Phosphoserine. Disordered regions lie at residues 378–399 (RAGP…LPAP), 442–481 (PATE…HLLL), and 501–550 (QSLR…KRES). A PPxY motif motif is present at residues 472 to 475 (PPPY). The segment covering 507 to 530 (TEQDRSDKSHKGAKGDKAGRDKKQ) has biased composition (basic and acidic residues). Serine 534 is subject to Phosphoserine. Positions 541-550 (NSRDEEKRES) are enriched in basic and acidic residues. Positions 626–931 (FVKIKTLGIG…ADDLKAHPFF (306 aa)) constitute a Protein kinase domain. ATP-binding positions include 632 to 640 (LGIGAFGEV) and lysine 655. Residue aspartate 749 is the Proton acceptor of the active site. Positions 932–1010 (NTIDFSRDIR…RRFFDDNGYP (79 aa)) constitute an AGC-kinase C-terminal domain. At threonine 999 the chain carries Phosphothreonine. Residues 1014–1042 (PKPSEPAESADPGDADLEGAAEGCQPVYV) form a disordered region.

The protein belongs to the protein kinase superfamily. AGC Ser/Thr protein kinase family. Interacts with and is phosphorylated by AURKA. Binds to AR. Interacts with AJUBA during mitosis and this complex regulates organization of the spindle apparatus through recruitment of gamma-tubulin to the centrosome. Interacts (via PPxY motif) with YAP1 (via WW domains). Interacts with MOB1A and MOB1B. Interacts with LIMD1, WTIP and AJUBA. Interacts with SNAI1. Interacts with WWC1, WWC2 and WWC3 (via their WW domains). Interacts (via UBA domain) with ubiquitinated AMOTL2; the interaction promotes LATS2 phosphorylation of YAP1. Mg(2+) serves as cofactor. In terms of processing, autophosphorylated and phosphorylated during M-phase and the G1/S-phase of the cell cycle. Phosphorylated and activated by STK3/MST2. Phosphorylated by MAP4Ks; in parallel to STK3/MST2 and resulting to its activation. Phosphorylation by NUAK2 may regulate its activity in phosphorylation and inactivation YAP1. Expressed at high levels in ovary and testis and at lower levels in all other tissues examined.

The protein resides in the cytoplasm. It is found in the cytoskeleton. The protein localises to the microtubule organizing center. Its subcellular location is the centrosome. It localises to the spindle pole. The protein resides in the nucleus. The enzyme catalyses L-seryl-[protein] + ATP = O-phospho-L-seryl-[protein] + ADP + H(+). It carries out the reaction L-threonyl-[protein] + ATP = O-phospho-L-threonyl-[protein] + ADP + H(+). In terms of biological role, negative regulator of YAP1 in the Hippo signaling pathway that plays a pivotal role in organ size control and tumor suppression by restricting proliferation and promoting apoptosis. The core of this pathway is composed of a kinase cascade wherein STK3/MST2 and STK4/MST1, in complex with its regulatory protein SAV1, phosphorylates and activates LATS1/2 in complex with its regulatory protein MOB1, which in turn phosphorylates and inactivates YAP1 oncoprotein and WWTR1/TAZ. Phosphorylation of YAP1 by LATS2 inhibits its translocation into the nucleus to regulate cellular genes important for cell proliferation, cell death, and cell migration. Also phosphorylates YAP1 in response to cell contact inhibition-driven WWP1 ubiquitination of AMOTL2, which results in LATS2 activation. Acts as a tumor suppressor which plays a critical role in centrosome duplication, maintenance of mitotic fidelity and genomic stability. Negatively regulates G1/S transition by down-regulating cyclin E/CDK2 kinase activity. Negative regulator of the androgen receptor. Phosphorylates SNAI1 in the nucleus leading to its nuclear retention and stabilization, which enhances its epithelial-mesenchymal transition and tumor cell invasion/migration activities. This tumor-promoting activity is independent of its effects upon YAP1 or WWTR1/TAZ. Acts as an activator of the NLRP3 inflammasome by mediating phosphorylation of 'Ser-265' of NLRP3 following NLRP3 palmitoylation, promoting NLRP3 activation by NEK7. In Mus musculus (Mouse), this protein is Serine/threonine-protein kinase LATS2.